Here is a 396-residue protein sequence, read N- to C-terminus: Elongation factor Tu (396 aa).

Residues 10–206 (KPHVNIGTIG…AVDESVPDPV (197 aa)) form the tr-type G domain. The G1 stretch occupies residues 19–26 (GHVDHGKT). 19–26 (GHVDHGKT) lines the GTP pocket. Position 26 (Thr26) interacts with Mg(2+). The tract at residues 62-66 (GITIN) is G2. The tract at residues 83–86 (DAPG) is G3. GTP-binding positions include 83 to 87 (DAPGH) and 138 to 141 (NKSD). Positions 138-141 (NKSD) are G4. The tract at residues 176-178 (SGL) is G5.

Belongs to the TRAFAC class translation factor GTPase superfamily. Classic translation factor GTPase family. EF-Tu/EF-1A subfamily. In terms of assembly, monomer.

It localises to the cytoplasm. It carries out the reaction GTP + H2O = GDP + phosphate + H(+). GTP hydrolase that promotes the GTP-dependent binding of aminoacyl-tRNA to the A-site of ribosomes during protein biosynthesis. This chain is Elongation factor Tu, found in Paenarthrobacter aurescens (strain TC1).